The primary structure comprises 252 residues: Glycine-rich cell wall structural protein 1.0 (252 aa).

Positions 1 to 30 (MATSKVLLSNVLFVFVCFGICSAARTLLTL) are cleaved as a signal peptide. The interval 231–252 (GSGYGGGGGSGEGGGHGGGYYP) is disordered.

Expressed in young hypocotyls.

It is found in the secreted. The protein resides in the cell wall. Functionally, responsible for plasticity of the cell wall. In Phaseolus vulgaris (Kidney bean), this protein is Glycine-rich cell wall structural protein 1.0.